The chain runs to 122 residues: MIQKETNLVVADNSGAKKVRCIHVFGGTGRRYAALGDQIIVSIKAAVPGGVVKKKDVCKAVVVRCVKEQRRKDGSYIRFDENAVVLLNAQGEPRGTRIFGPVARELRDRKYMKIVSLAPEVL.

It belongs to the universal ribosomal protein uL14 family. As to quaternary structure, part of the 50S ribosomal subunit. Forms a cluster with proteins L3 and L19. In the 70S ribosome, L14 and L19 interact and together make contacts with the 16S rRNA in bridges B5 and B8.

Functionally, binds to 23S rRNA. Forms part of two intersubunit bridges in the 70S ribosome. The protein is Large ribosomal subunit protein uL14 of Chlorobium phaeobacteroides (strain DSM 266 / SMG 266 / 2430).